The following is a 314-amino-acid chain: Methionyl-tRNA formyltransferase (314 aa).

113–116 is a binding site for (6S)-5,6,7,8-tetrahydrofolate; that stretch reads SLLP.

The protein belongs to the Fmt family.

It carries out the reaction L-methionyl-tRNA(fMet) + (6R)-10-formyltetrahydrofolate = N-formyl-L-methionyl-tRNA(fMet) + (6S)-5,6,7,8-tetrahydrofolate + H(+). In terms of biological role, attaches a formyl group to the free amino group of methionyl-tRNA(fMet). The formyl group appears to play a dual role in the initiator identity of N-formylmethionyl-tRNA by promoting its recognition by IF2 and preventing the misappropriation of this tRNA by the elongation apparatus. This chain is Methionyl-tRNA formyltransferase, found in Chlorobaculum tepidum (strain ATCC 49652 / DSM 12025 / NBRC 103806 / TLS) (Chlorobium tepidum).